The following is a 226-amino-acid chain: Leucyl/phenylalanyl-tRNA--protein transferase (226 aa).

It belongs to the L/F-transferase family.

It is found in the cytoplasm. It catalyses the reaction N-terminal L-lysyl-[protein] + L-leucyl-tRNA(Leu) = N-terminal L-leucyl-L-lysyl-[protein] + tRNA(Leu) + H(+). The catalysed reaction is N-terminal L-arginyl-[protein] + L-leucyl-tRNA(Leu) = N-terminal L-leucyl-L-arginyl-[protein] + tRNA(Leu) + H(+). The enzyme catalyses L-phenylalanyl-tRNA(Phe) + an N-terminal L-alpha-aminoacyl-[protein] = an N-terminal L-phenylalanyl-L-alpha-aminoacyl-[protein] + tRNA(Phe). In terms of biological role, functions in the N-end rule pathway of protein degradation where it conjugates Leu, Phe and, less efficiently, Met from aminoacyl-tRNAs to the N-termini of proteins containing an N-terminal arginine or lysine. The polypeptide is Leucyl/phenylalanyl-tRNA--protein transferase (Azotobacter vinelandii (strain DJ / ATCC BAA-1303)).